A 1628-amino-acid chain; its full sequence is Lysine-specific histone demethylase 1 homolog 3 (1628 aa).

The disordered stretch occupies residues 1–71 (MDGKEKKSGS…KKLSALGKDS (71 aa)). Residues 19 to 28 (FDDDADDDEP) show a composition bias toward acidic residues. The span at 43-64 (KDKVETESTGKQRQKQVVEKKL) shows a compositional bias: basic and acidic residues. The SWIRM domain maps to 378–478 (GRAAAVTAGL…AGISSVNGKA (101 aa)). The FAD site is built by E647, R649, R655, and E1077. The disordered stretch occupies residues 1271 to 1317 (SGKKSLRQANTTNTSRIRRKLNSPDTDSKGKLSNGNDVKTDEEFEDN).

Belongs to the flavin monoamine oxidase family. It depends on FAD as a cofactor.

Probable histone demethylase that reduces the levels of histone H3 'Lys-4' methylation in chromatin. The sequence is that of Lysine-specific histone demethylase 1 homolog 3 (LDL3) from Arabidopsis thaliana (Mouse-ear cress).